The following is a 782-amino-acid chain: uncharacterized protein (782 aa).

Residues 10-30 traverse the membrane as a helical segment; that stretch reads LLTITIGAVAVSSILLGGIFY. The segment covering 57–76 has biased composition (basic and acidic residues); it reads LDYQKARPSIKDSNLKEIPK. The segment at 57–171 is disordered; sequence LDYQKARPSI…PQPQQVPNNS (115 aa). Positions 77-97 are enriched in pro residues; the sequence is PKPQPKPKPQPTPFPDPIPTP. Over residues 98–124 the composition is skewed to basic and acidic residues; it reads PKKEELKKPDIKPEEPKKPEIKPEPKP. Pro residues predominate over residues 125 to 135; sequence EPIPQPAPPIE.

This sequence to U.parvum UU046.

Its subcellular location is the membrane. This is an uncharacterized protein from Ureaplasma parvum serovar 3 (strain ATCC 700970).